Here is a 107-residue protein sequence, read N- to C-terminus: NADH-quinone oxidoreductase subunit K 2 (107 aa).

3 consecutive transmembrane segments (helical) span residues 3–23 (LPIYYPLGLGALLFGLGLWGA), 30–50 (VRILMFIEIMLNGVNLNLITF), and 67–87 (ILTLFVMTVAAAEASVGLAII).

This sequence belongs to the complex I subunit 4L family. In terms of assembly, NDH-1 is composed of 14 different subunits. Subunits NuoA, H, J, K, L, M, N constitute the membrane sector of the complex.

It is found in the cell membrane. The enzyme catalyses a quinone + NADH + 5 H(+)(in) = a quinol + NAD(+) + 4 H(+)(out). In terms of biological role, NDH-1 shuttles electrons from NADH, via FMN and iron-sulfur (Fe-S) centers, to quinones in the respiratory chain. The immediate electron acceptor for the enzyme in this species is believed to be a menaquinone. Couples the redox reaction to proton translocation (for every two electrons transferred, four hydrogen ions are translocated across the cytoplasmic membrane), and thus conserves the redox energy in a proton gradient. The polypeptide is NADH-quinone oxidoreductase subunit K 2 (Symbiobacterium thermophilum (strain DSM 24528 / JCM 14929 / IAM 14863 / T)).